The primary structure comprises 273 residues: Pantothenate synthetase (273 aa).

An ATP-binding site is contributed by 27-34 (MGALHDGH). Catalysis depends on H34, which acts as the Proton donor. Position 58 (Q58) interacts with (R)-pantoate. Position 58 (Q58) interacts with beta-alanine. 144–147 (GKKD) provides a ligand contact to ATP. (R)-pantoate is bound at residue Q150. Residues V173 and 181-184 (LSSR) contribute to the ATP site.

It belongs to the pantothenate synthetase family. In terms of assembly, homodimer.

It is found in the cytoplasm. The catalysed reaction is (R)-pantoate + beta-alanine + ATP = (R)-pantothenate + AMP + diphosphate + H(+). Its pathway is cofactor biosynthesis; (R)-pantothenate biosynthesis; (R)-pantothenate from (R)-pantoate and beta-alanine: step 1/1. Its function is as follows. Catalyzes the condensation of pantoate with beta-alanine in an ATP-dependent reaction via a pantoyl-adenylate intermediate. In Campylobacter concisus (strain 13826), this protein is Pantothenate synthetase.